Consider the following 311-residue polypeptide: Probable manganese-dependent inorganic pyrophosphatase (311 aa).

6 residues coordinate Mn(2+): His-9, Asp-13, Asp-15, Asp-77, His-99, and Asp-151.

This sequence belongs to the PPase class C family. The cofactor is Mn(2+).

Its subcellular location is the cytoplasm. The enzyme catalyses diphosphate + H2O = 2 phosphate + H(+). This Streptococcus pneumoniae (strain JJA) protein is Probable manganese-dependent inorganic pyrophosphatase.